Reading from the N-terminus, the 74-residue chain is Serine protease inhibitor Kazal-type 7 (74 aa).

The signal sequence occupies residues 1-17 (MKLLGGLLLLFTATCLC). Residues 18–74 (NVDCDIYKKYPVVAIPCPIENIPVCGSDYITYGNKCKLCTEILRSNGKIQFLHEGHC) enclose the Kazal-like domain. 3 cysteine pairs are disulfide-bonded: cysteine 21/cysteine 56, cysteine 34/cysteine 53, and cysteine 42/cysteine 74.

It localises to the secreted. Its function is as follows. Probable serine protease inhibitor. The chain is Serine protease inhibitor Kazal-type 7 (Spink7) from Rattus norvegicus (Rat).